The sequence spans 358 residues: Transcription factor PCF6 (358 aa).

The segment at 1-29 (MEAAVGDGEGGGGGGGRGKRGRGGGGGEM) is disordered. Gly residues predominate over residues 7-16 (DGEGGGGGGG). One can recognise a TCP domain in the interval 52–110 (GKDRHSKVYTAKGIRDRRVRLSVATAIQFYDLQDRLGFDQPSKAIEWLINAASPAIDTL). Disordered stretches follow at residues 127–163 (ADAAPTRRRSQQQQQQLSNKSGCSSTSETSKGSDKEV) and 282–308 (ANRGTLQSNSPSNMSGHHHHHHQQQLQ). 2 stretches are compositionally biased toward polar residues: residues 143–156 (LSNKSGCSSTSETS) and 285–296 (GTLQSNSPSNMS).

In terms of assembly, forms homodimers and heterodimers.

It localises to the nucleus. Transcription activator. Binds the promoter core sequence 5'-GGNCC-3'. The sequence is that of Transcription factor PCF6 (PCF6) from Oryza sativa subsp. indica (Rice).